Consider the following 340-residue polypeptide: S-adenosylmethionine:tRNA ribosyltransferase-isomerase (340 aa).

It belongs to the QueA family. As to quaternary structure, monomer.

Its subcellular location is the cytoplasm. It carries out the reaction 7-aminomethyl-7-carbaguanosine(34) in tRNA + S-adenosyl-L-methionine = epoxyqueuosine(34) in tRNA + adenine + L-methionine + 2 H(+). It participates in tRNA modification; tRNA-queuosine biosynthesis. Its function is as follows. Transfers and isomerizes the ribose moiety from AdoMet to the 7-aminomethyl group of 7-deazaguanine (preQ1-tRNA) to give epoxyqueuosine (oQ-tRNA). The chain is S-adenosylmethionine:tRNA ribosyltransferase-isomerase from Nitratiruptor sp. (strain SB155-2).